Reading from the N-terminus, the 414-residue chain is Solute carrier family 25 member 46-B (414 aa).

Over residues 1–13 (MQPRRPDRFDGLE) the composition is skewed to basic and acidic residues. A disordered region spans residues 1-89 (MQPRRPDRFD…AFGEENSGSS (89 aa)). A compositionally biased stretch (polar residues) spans 29–50 (YQSSFPARSLSSSGDLSQQWVT). A Solcar 1 repeat occupies 92–183 (QVNRFAGFGI…GMLSEFTHLP (92 aa)). 6 helical membrane-spanning segments follow: residues 99–119 (FGIGLASLFTENVLAHPCIVL), 159–179 (MGSTFIVQGISLGAEGMLSEF), 198–218 (HLLLKGLVYVIVTPFYSASLI), 254–274 (LLPLLVLTFPTVLHGILHYII), 310–330 (FPELLANFAASLCADVLLYPL), and 379–399 (LGFYKGFGAVVVQYTLHAIVL). The Solcar 2 repeat unit spans residues 307 to 412 (EDYFPELLAN…KIIYSSVVQT (106 aa)).

Belongs to the mitochondrial carrier (TC 2.A.29) family.

It is found in the mitochondrion outer membrane. Its function is as follows. May play a role in mitochondrial dynamics by controlling mitochondrial membrane fission. The sequence is that of Solute carrier family 25 member 46-B (slc25a46-b) from Xenopus laevis (African clawed frog).